Reading from the N-terminus, the 578-residue chain is Polypeptide N-acetylgalactosaminyltransferase 4 (578 aa).

The Cytoplasmic portion of the chain corresponds to 1 to 12; that stretch reads MAVRWTWAGKSC. A helical; Signal-anchor for type II membrane protein transmembrane segment spans residues 13 to 35; sequence LLLALLTLAYILVEFSVSTLYAS. Residues 36–578 are Lumenal-facing; sequence PGAGGARELG…DKNQLWRFEK (543 aa). 5 disulfide bridges follow: Cys-124–Cys-357, Cys-348–Cys-421, Cys-457–Cys-477, Cys-503–Cys-518, and Cys-547–Cys-565. Positions 134–243 are catalytic subdomain A; that stretch reads LPTTSVIIAF…TGWLEPLLER (110 aa). Substrate is bound by residues Asp-175 and Arg-204. Mn(2+) is bound by residues Asp-227 and His-229. A catalytic subdomain B region spans residues 303–365; the sequence is PIRSPTMAGG…PCSHVGHVFP (63 aa). Substrate is bound at residue Trp-334. His-362 contributes to the Mn(2+) binding site. Residue Tyr-370 coordinates substrate. Positions 444–577 constitute a Ricin B-type lectin domain; sequence WHGAIRSMGI…LDKNQLWRFE (134 aa). The N-linked (GlcNAc...) asparagine glycan is linked to Asn-471.

Belongs to the glycosyltransferase 2 family. GalNAc-T subfamily. The cofactor is Mn(2+). Highly expressed in sublingual gland, stomach, colon, small intestine and cervix. Expressed at intermediate levels in kidney, ovary, lung and uterus. Weakly expressed in spleen, liver, heart and brain. Not expressed in submandibular and parotid glands, skeletal muscle and testis.

The protein localises to the golgi apparatus membrane. It catalyses the reaction L-seryl-[protein] + UDP-N-acetyl-alpha-D-galactosamine = a 3-O-[N-acetyl-alpha-D-galactosaminyl]-L-seryl-[protein] + UDP + H(+). It carries out the reaction L-threonyl-[protein] + UDP-N-acetyl-alpha-D-galactosamine = a 3-O-[N-acetyl-alpha-D-galactosaminyl]-L-threonyl-[protein] + UDP + H(+). Its pathway is protein modification; protein glycosylation. In terms of biological role, catalyzes the initial reaction in O-linked oligosaccharide biosynthesis, the transfer of an N-acetyl-D-galactosamine residue to a serine or threonine residue on the protein receptor. Has a highest activity toward EA2 peptide substrate and a much lower activity with EPO-T, Muc2, Muc1a, Muc1b. This is Polypeptide N-acetylgalactosaminyltransferase 4 (Galnt4) from Mus musculus (Mouse).